We begin with the raw amino-acid sequence, 162 residues long: MSYSSTETSTYTTIDVEAVMRRITADLVMIAASTGAITESKAREYAHDIELLAKNGYLDYVDVTLISNGVEQKATRFHVNESGELANDRPGDARWPRIQGAYLRIVVNNRSTYDQAARQKLSGKMKISWSPCSDDISHSGLTQSGGREYSSNGYGMQRKDYN.

The tract at residues 138–162 (HSGLTQSGGREYSSNGYGMQRKDYN) is disordered. The segment covering 139-154 (SGLTQSGGREYSSNGY) has biased composition (polar residues).

The protein belongs to the HORMA family. HORMA1 subfamily. As to quaternary structure, forms complexes with CdnC with 1:1 and 2:2 stoichimetry, and a 1:1:6 CdnC:Cap7:Cap6 complex.

Functionally, sensor protein of a CBASS antivirus system. CBASS (cyclic oligonucleotide-based antiphage signaling system) provides immunity against bacteriophage. The CD-NTase protein synthesizes cyclic nucleotides in response to infection; these serve as specific second messenger signals. The signals activate a diverse range of effectors, leading to bacterial cell death and thus abortive phage infection. A type III CBASS system. Expression of this CBASS system (Cap18-Cap6-Cap7-CdnC-CapW-Cap17) in a susceptible E.coli (strain MG1655) confers resistance to bacteriophage P1. The sensor protein for this CBASS system. Binds to a closure peptide, which allows it to activate CdnC for second messenger synthesis. The sequence is that of CD-NTase-associated protein 7 from Escherichia coli (strain KTE188).